The following is a 221-amino-acid chain: Ribosomal RNA small subunit methyltransferase G 3 (221 aa).

Residues G85, F90, I136–E137, and R150 each bind S-adenosyl-L-methionine.

The protein belongs to the methyltransferase superfamily. RNA methyltransferase RsmG family.

It is found in the cytoplasm. The catalysed reaction is guanosine(527) in 16S rRNA + S-adenosyl-L-methionine = N(7)-methylguanosine(527) in 16S rRNA + S-adenosyl-L-homocysteine. Functionally, specifically methylates the N7 position of guanine in position 527 of 16S rRNA. The protein is Ribosomal RNA small subunit methyltransferase G 3 of Bdellovibrio bacteriovorus (strain ATCC 15356 / DSM 50701 / NCIMB 9529 / HD100).